Here is an 84-residue protein sequence, read N- to C-terminus: Small ribosomal subunit protein uS17 (84 aa).

The protein belongs to the universal ribosomal protein uS17 family. In terms of assembly, part of the 30S ribosomal subunit.

Its function is as follows. One of the primary rRNA binding proteins, it binds specifically to the 5'-end of 16S ribosomal RNA. This is Small ribosomal subunit protein uS17 from Vibrio parahaemolyticus serotype O3:K6 (strain RIMD 2210633).